The following is a 261-amino-acid chain: Cytochrome c oxidase subunit 3 (261 aa).

Over 1-15 (MTHQAHAYHMVDPSP) the chain is Mitochondrial matrix. The chain crosses the membrane as a helical span at residues 16 to 34 (WPLTGAVAALLMTSGLAVW). Topologically, residues 35–40 (FHFHST) are mitochondrial intermembrane. The helical transmembrane segment at 41–66 (TLMALGTVLLLLTMYQWWRDIIREGT) threads the bilayer. Topologically, residues 67-72 (FQGHHT) are mitochondrial matrix. A helical membrane pass occupies residues 73–105 (PPVQKGLRYGMILFITSEVFFFLGFFWAFYHAS). Over 106–128 (LAPTPELGGCWPPTGITTLDPFE) the chain is Mitochondrial intermembrane. A helical transmembrane segment spans residues 129 to 152 (VPLLNTAVLLASGVTVTWAHHSIM). Residues 153–155 (EGE) lie on the Mitochondrial matrix side of the membrane. The chain crosses the membrane as a helical span at residues 156 to 183 (RKQAIHSLTLTILLGFYFTFLQGLEYYD). Residues 184 to 190 (APFTIAD) are Mitochondrial intermembrane-facing. The chain crosses the membrane as a helical span at residues 191–223 (GVYGSTFFVATGFHGLHVIIGSTFLAVCLLRQI). Over 224 to 232 (RYHFTSEHH) the chain is Mitochondrial matrix. A helical membrane pass occupies residues 233-256 (FGFEAAAWYWHFVDVVWLFLYISI). Over 257-261 (YWWGS) the chain is Mitochondrial intermembrane.

Belongs to the cytochrome c oxidase subunit 3 family. As to quaternary structure, component of the cytochrome c oxidase (complex IV, CIV), a multisubunit enzyme composed of 14 subunits. The complex is composed of a catalytic core of 3 subunits MT-CO1, MT-CO2 and MT-CO3, encoded in the mitochondrial DNA, and 11 supernumerary subunits COX4I, COX5A, COX5B, COX6A, COX6B, COX6C, COX7A, COX7B, COX7C, COX8 and NDUFA4, which are encoded in the nuclear genome. The complex exists as a monomer or a dimer and forms supercomplexes (SCs) in the inner mitochondrial membrane with NADH-ubiquinone oxidoreductase (complex I, CI) and ubiquinol-cytochrome c oxidoreductase (cytochrome b-c1 complex, complex III, CIII), resulting in different assemblies (supercomplex SCI(1)III(2)IV(1) and megacomplex MCI(2)III(2)IV(2)).

The protein resides in the mitochondrion inner membrane. The catalysed reaction is 4 Fe(II)-[cytochrome c] + O2 + 8 H(+)(in) = 4 Fe(III)-[cytochrome c] + 2 H2O + 4 H(+)(out). Its function is as follows. Component of the cytochrome c oxidase, the last enzyme in the mitochondrial electron transport chain which drives oxidative phosphorylation. The respiratory chain contains 3 multisubunit complexes succinate dehydrogenase (complex II, CII), ubiquinol-cytochrome c oxidoreductase (cytochrome b-c1 complex, complex III, CIII) and cytochrome c oxidase (complex IV, CIV), that cooperate to transfer electrons derived from NADH and succinate to molecular oxygen, creating an electrochemical gradient over the inner membrane that drives transmembrane transport and the ATP synthase. Cytochrome c oxidase is the component of the respiratory chain that catalyzes the reduction of oxygen to water. Electrons originating from reduced cytochrome c in the intermembrane space (IMS) are transferred via the dinuclear copper A center (CU(A)) of subunit 2 and heme A of subunit 1 to the active site in subunit 1, a binuclear center (BNC) formed by heme A3 and copper B (CU(B)). The BNC reduces molecular oxygen to 2 water molecules using 4 electrons from cytochrome c in the IMS and 4 protons from the mitochondrial matrix. This is Cytochrome c oxidase subunit 3 (mt-co3) from Gadus morhua (Atlantic cod).